A 341-amino-acid chain; its full sequence is RNA 3'-terminal phosphate cyclase (341 aa).

ATP-binding positions include Gln102 and 283-287 (HLADQ). His308 serves as the catalytic Tele-AMP-histidine intermediate.

Belongs to the RNA 3'-terminal cyclase family. Type 1 subfamily.

It is found in the cytoplasm. It carries out the reaction a 3'-end 3'-phospho-ribonucleotide-RNA + ATP = a 3'-end 2',3'-cyclophospho-ribonucleotide-RNA + AMP + diphosphate. Its function is as follows. Catalyzes the conversion of 3'-phosphate to a 2',3'-cyclic phosphodiester at the end of RNA. The mechanism of action of the enzyme occurs in 3 steps: (A) adenylation of the enzyme by ATP; (B) transfer of adenylate to an RNA-N3'P to produce RNA-N3'PP5'A; (C) and attack of the adjacent 2'-hydroxyl on the 3'-phosphorus in the diester linkage to produce the cyclic end product. The biological role of this enzyme is unknown but it is likely to function in some aspects of cellular RNA processing. The polypeptide is RNA 3'-terminal phosphate cyclase (Pseudomonas aeruginosa (strain UCBPP-PA14)).